Here is a 205-residue protein sequence, read N- to C-terminus: High frequency lysogenization protein HflD homolog (205 aa).

This sequence belongs to the HflD family.

Its subcellular location is the cytoplasm. The protein localises to the cell inner membrane. The chain is High frequency lysogenization protein HflD homolog from Photobacterium profundum (strain SS9).